The chain runs to 303 residues: Hydroxyacylglutathione hydrolase, mitochondrial (303 aa).

Zn(2+) is bound by residues His-97, His-99, Asp-101, His-102, His-153, and Asp-177. Substrate-binding positions include 186-188 (KFF), 216-218 (HEY), and 292-295 (RKEK). Position 216 (His-216) interacts with Zn(2+).

This sequence belongs to the metallo-beta-lactamase superfamily. Glyoxalase II family. Monomer. Zn(2+) is required as a cofactor.

The protein resides in the mitochondrion matrix. The protein localises to the cytoplasm. The enzyme catalyses an S-(2-hydroxyacyl)glutathione + H2O = a 2-hydroxy carboxylate + glutathione + H(+). It carries out the reaction (R)-S-lactoylglutathione + H2O = (R)-lactate + glutathione + H(+). Functionally, thiolesterase that catalyzes the hydrolysis of S-D-lactoyl-glutathione to form glutathione and D-lactic acid. This chain is Hydroxyacylglutathione hydrolase, mitochondrial (hagh), found in Danio rerio (Zebrafish).